A 602-amino-acid chain; its full sequence is SAGA complex subunit SPT8 (602 aa).

Residues 1 to 141 (MDEVDDILIN…REASSSTHEA (141 aa)) form a disordered region. 2 stretches are compositionally biased toward acidic residues: residues 14–23 (VDDEEDDEEM) and 36–75 (EGNDDGGEDEEDDDDDDEDDDDDEDEREDDDEQEDDDGED). At Thr-85 the chain carries Phosphothreonine. A phosphoserine mark is found at Ser-108, Ser-123, and Ser-131. WD repeat units follow at residues 173-212 (PIQTHVNALAVSRGLKYLFLGGSDGYIRKYDLLNTLEGKL) and 305-346 (GHTQ…NEFK). The segment at 366-418 (VSGNVNSGKENENADDDMDSLFGDEDEDEKQDAGNEPVETGDGSNGEENKEQI) is disordered. Positions 378 to 395 (NADDDMDSLFGDEDEDEK) are enriched in acidic residues. WD repeat units follow at residues 415 to 454 (KEQISEESLNIVYDESVFMTSGLNGSVHIWDRRMTQSPAL), 506 to 544 (SISGPVSCVKAMPNNKHLLCASRDNIRLYNVEIAVDASN), and 560 to 600 (HHGG…YDID). The residue at position 451 (Ser-451) is a Phosphoserine.

This sequence belongs to the WD repeat SPT8 family. Component of the 1.8 MDa SAGA (Spt-Ada-Gcn5 acetyltransferase) complex, which is composed of 19 subunits TRA1, SPT7, TAF5, NGG1/ADA3, SGF73, SPT20/ADA5, SPT8, TAF12, TAF6, HFI1/ADA1, UBP8, GCN5, ADA2, SPT3, SGF29, TAF10, TAF9, SGF11 and SUS1. The SAGA complex is composed of 4 modules, namely the HAT (histone acetyltransferase) module (GCN5, ADA2, NGG1/ADA3 and SGF29), the DUB (deubiquitinating) module (UBP8, SGF11, SGF73 and SUS1), the core or TAF (TBP-associated factor) module (TAF5, TAF6, TAF9, TAF10 and TAF12), and the Tra1 or SPT (Suppressor of Ty) module (TRA1, HFI1/ADA1, SPT3, SPT7, SPT8 and SPT20/ADA5). The Tra1/SPT module binds activators, the core module recruits TBP (TATA-binding protein), the HAT module contains the histone H3 acetyltransferase GCN5, and the DUB module comprises the histone H2B deubiquitinase UBP8.

The protein localises to the nucleus. Functionally, component of the transcription coactivator SAGA complex. SAGA acts as a general cofactor required for essentially all RNA polymerase II transcription. At the promoters, SAGA is required for transcription pre-initiation complex (PIC) recruitment. It influences RNA polymerase II transcriptional activity through different activities such as TBP interaction (via core/TAF module) and promoter selectivity, interaction with transcription activators (via Tra1/SPT module), and chromatin modification through histone acetylation (via HAT module) and deubiquitination (via DUB module). SAGA preferentially acetylates histones H3 (to form H3K9ac, H3K14ac, H3K18ac and H3K23ac) and H2B and deubiquitinates histone H2B. SAGA interacts with DNA via upstream activating sequences (UASs). During SAGA-mediated transcriptional inhibition, SPT3 and SPT8 prevent binding of TBP to the TATA box. The polypeptide is SAGA complex subunit SPT8 (SPT8) (Saccharomyces cerevisiae (strain ATCC 204508 / S288c) (Baker's yeast)).